A 38-amino-acid polypeptide reads, in one-letter code: Mu-agatoxin-Hc1c (38 aa).

Intrachain disulfides connect Cys-3–Cys-19, Cys-10–Cys-24, Cys-18–Cys-34, and Cys-26–Cys-32. Serine amide is present on Ser-38.

This sequence belongs to the neurotoxin 07 (Beta/delta-agtx) family. 02 (aga-3) subfamily. In terms of tissue distribution, expressed by the venom gland.

It localises to the secreted. In terms of biological role, insecticidal neurotoxin that induces irreversible neuromuscular blockade in house crickets (A.domesticus). Modifies presynaptic voltage-gated sodium channels (Nav), causing them to open at the normal resting potential of the nerve. This leads to spontaneous release of neurotransmitter and repetitive action potentials in motor neurons. This Hololena curta (Funnel-web spider) protein is Mu-agatoxin-Hc1c.